The primary structure comprises 845 residues: Protein translocase subunit SecA 1 (845 aa).

ATP contacts are provided by residues glutamine 85, 103-107 (GEGKT), and aspartate 492.

This sequence belongs to the SecA family. Monomer and homodimer. Part of the essential Sec protein translocation apparatus which comprises SecA, SecYEG and auxiliary proteins SecDF. Other proteins may also be involved.

Its subcellular location is the cell membrane. The protein resides in the cytoplasm. It carries out the reaction ATP + H2O + cellular proteinSide 1 = ADP + phosphate + cellular proteinSide 2.. Part of the Sec protein translocase complex. Interacts with the SecYEG preprotein conducting channel. Has a central role in coupling the hydrolysis of ATP to the transfer of proteins into and across the cell membrane, serving as an ATP-driven molecular motor driving the stepwise translocation of polypeptide chains across the membrane. This is Protein translocase subunit SecA 1 from Corynebacterium glutamicum (strain ATCC 13032 / DSM 20300 / JCM 1318 / BCRC 11384 / CCUG 27702 / LMG 3730 / NBRC 12168 / NCIMB 10025 / NRRL B-2784 / 534).